We begin with the raw amino-acid sequence, 463 residues long: Chromosomal replication initiator protein DnaA (463 aa).

The segment at 1–83 (MSTNQIILTD…LQLFQHYNNT (83 aa)) is domain I, interacts with DnaA modulators. The domain II stretch occupies residues 83–124 (TIKSIEIITKELPGTTQTVIELPTKTFADIGSSELNSENIFS). The domain III, AAA+ region stretch occupies residues 125–343 (TLDVRFTFDN…GALNKVIAHS (219 aa)). ATP is bound by residues Gly-171, Gly-173, Lys-174, and Thr-175. Residues 344–463 (NFTLKEITLE…INLLMKILQN (120 aa)) are domain IV, binds dsDNA.

It belongs to the DnaA family. As to quaternary structure, oligomerizes as a right-handed, spiral filament on DNA at oriC.

The protein resides in the cytoplasm. In terms of biological role, plays an essential role in the initiation and regulation of chromosomal replication. ATP-DnaA binds to the origin of replication (oriC) to initiate formation of the DNA replication initiation complex once per cell cycle. Binds the DnaA box (a 9 base pair repeat at the origin) and separates the double-stranded (ds)DNA. Forms a right-handed helical filament on oriC DNA; dsDNA binds to the exterior of the filament while single-stranded (ss)DNA is stabiized in the filament's interior. The ATP-DnaA-oriC complex binds and stabilizes one strand of the AT-rich DNA unwinding element (DUE), permitting loading of DNA polymerase. After initiation quickly degrades to an ADP-DnaA complex that is not apt for DNA replication. Binds acidic phospholipids. This Rickettsia felis (strain ATCC VR-1525 / URRWXCal2) (Rickettsia azadi) protein is Chromosomal replication initiator protein DnaA.